The sequence spans 163 residues: MEFHLDATFFAFVGLVLFLALVVYLKVPGMMARSLDDRADQIRNELAEAKRLREEAQHLLAEYQRKRKEAEAEAAHIVAAAEREAEMLTADAKKKTEEFVANRTALSEQKILQAEAEAMKAVRSAAVDLAIAAAETVLAKQADAKVQSELFGNAVSQVKTRLN.

The helical transmembrane segment at 5 to 25 threads the bilayer; that stretch reads LDATFFAFVGLVLFLALVVYL.

It belongs to the ATPase B chain family. In terms of assembly, F-type ATPases have 2 components, F(1) - the catalytic core - and F(0) - the membrane proton channel. F(1) has five subunits: alpha(3), beta(3), gamma(1), delta(1), epsilon(1). F(0) has three main subunits: a(1), b(2) and c(10-14). The alpha and beta chains form an alternating ring which encloses part of the gamma chain. F(1) is attached to F(0) by a central stalk formed by the gamma and epsilon chains, while a peripheral stalk is formed by the delta and b chains.

The protein resides in the cell inner membrane. F(1)F(0) ATP synthase produces ATP from ADP in the presence of a proton or sodium gradient. F-type ATPases consist of two structural domains, F(1) containing the extramembraneous catalytic core and F(0) containing the membrane proton channel, linked together by a central stalk and a peripheral stalk. During catalysis, ATP synthesis in the catalytic domain of F(1) is coupled via a rotary mechanism of the central stalk subunits to proton translocation. Its function is as follows. Component of the F(0) channel, it forms part of the peripheral stalk, linking F(1) to F(0). In Rhizobium etli (strain CIAT 652), this protein is ATP synthase subunit b 1.